Consider the following 328-residue polypeptide: uncharacterized protein (328 aa).

This is an uncharacterized protein from Bacillus anthracis.